We begin with the raw amino-acid sequence, 410 residues long: Arginine biosynthesis bifunctional protein ArgJ (410 aa).

Substrate-binding residues include threonine 160, lysine 186, threonine 197, glutamate 283, asparagine 405, and threonine 410. Threonine 197 serves as the catalytic Nucleophile.

The protein belongs to the ArgJ family. Heterotetramer of two alpha and two beta chains.

It localises to the cytoplasm. It carries out the reaction N(2)-acetyl-L-ornithine + L-glutamate = N-acetyl-L-glutamate + L-ornithine. It catalyses the reaction L-glutamate + acetyl-CoA = N-acetyl-L-glutamate + CoA + H(+). The protein operates within amino-acid biosynthesis; L-arginine biosynthesis; L-ornithine and N-acetyl-L-glutamate from L-glutamate and N(2)-acetyl-L-ornithine (cyclic): step 1/1. It functions in the pathway amino-acid biosynthesis; L-arginine biosynthesis; N(2)-acetyl-L-ornithine from L-glutamate: step 1/4. Its function is as follows. Catalyzes two activities which are involved in the cyclic version of arginine biosynthesis: the synthesis of N-acetylglutamate from glutamate and acetyl-CoA as the acetyl donor, and of ornithine by transacetylation between N(2)-acetylornithine and glutamate. This is Arginine biosynthesis bifunctional protein ArgJ from Geobacillus kaustophilus (strain HTA426).